Reading from the N-terminus, the 312-residue chain is Cytochrome f (312 aa).

A signal peptide spans Met-1–Ala-30. Tyr-31, Cys-51, Cys-54, and His-55 together coordinate heme. A helical transmembrane segment spans residues Val-278–Lys-298.

Belongs to the cytochrome f family. In terms of assembly, the 4 large subunits of the cytochrome b6-f complex are cytochrome b6, subunit IV (17 kDa polypeptide, petD), cytochrome f and the Rieske protein, while the 4 small subunits are PetG, PetL, PetM and PetN. The complex functions as a dimer. The cofactor is heme.

The protein localises to the plastid. The protein resides in the chloroplast thylakoid membrane. Its function is as follows. Component of the cytochrome b6-f complex, which mediates electron transfer between photosystem II (PSII) and photosystem I (PSI), cyclic electron flow around PSI, and state transitions. The sequence is that of Cytochrome f (petA) from Bigelowiella natans (Pedinomonas minutissima).